We begin with the raw amino-acid sequence, 416 residues long: Casein kinase I isoform epsilon (416 aa).

Residues 9-277 enclose the Protein kinase domain; sequence YRLGRKIGSG…YLRQLFRNLF (269 aa). ATP-binding positions include 15 to 23 and lysine 38; that span reads IGSGSFGDI. Aspartate 128 serves as the catalytic Proton acceptor. Over residues 301 to 318 the composition is skewed to basic and acidic residues; it reads PEDVDRERREHEREERMG. The interval 301–416 is disordered; the sequence is PEDVDRERRE…TSVPFDHLGK (116 aa). Phosphoserine occurs at positions 343 and 354. Residues 351-365 are compositionally biased toward polar residues; the sequence is TPASRIQQTGNTSPR. Position 362 is a phosphothreonine (threonine 362). Serine 363 is subject to Phosphoserine. At arginine 382 the chain carries Omega-N-methylarginine. Phosphoserine occurs at positions 389, 405, and 408.

It belongs to the protein kinase superfamily. CK1 Ser/Thr protein kinase family. Casein kinase I subfamily. Monomer. Component of the circadian core oscillator, which includes the CRY proteins, CLOCK, or NPAS2, ARTNL/BMAL1 or ARTNL2/BMAL2, CSNK1D and/or CSNK1E, TIMELESS and the PER proteins. Interacts with ANKRD6. Interacts with PER1. Interacts with DBNDD2, LRP5, LRP6 and SOCS3. Interacts with SNAI1 (via zinc fingers). Interacts with DDX3X; this interaction greatly enhances CSNK1E affinity for ATP and DVL2 phosphorylation, but inhibits DDX3X ATPase/helicase activity. In the presence of RNA, the interaction is decreased. Interacts with FAM83A, FAM83B, FAM83E and FAM83H (via DUF1669). Post-translationally, autophosphorylated. Partially dephosphorylated by PPP5C. May be dephosphorylated by PP1. In terms of tissue distribution, expressed in all tissues examined, including brain, heart, lung, liver, pancreas, kidney, placenta and skeletal muscle. Expressed in monocytes and lymphocytes but not in granulocytes.

It localises to the cytoplasm. The protein localises to the nucleus. The enzyme catalyses L-seryl-[protein] + ATP = O-phospho-L-seryl-[protein] + ADP + H(+). It catalyses the reaction L-threonyl-[protein] + ATP = O-phospho-L-threonyl-[protein] + ADP + H(+). Its activity is regulated as follows. Phosphorylation leads to a decrease in the catalytic activity. Its function is as follows. Casein kinases are operationally defined by their preferential utilization of acidic proteins such as caseins as substrates. Participates in Wnt signaling. Phosphorylates DVL1. Phosphorylates DVL2. Phosphorylates NEDD9/HEF1. Central component of the circadian clock. In balance with PP1, determines the circadian period length, through the regulation of the speed and rhythmicity of PER1 and PER2 phosphorylation. Controls PER1 and PER2 nuclear transport and degradation. Inhibits cytokine-induced granuloytic differentiation. This chain is Casein kinase I isoform epsilon (Csnk1e), found in Mus musculus (Mouse).